The sequence spans 279 residues: ATP synthase subunit delta (279 aa).

The protein belongs to the ATPase delta chain family. F-type ATPases have 2 components, F(1) - the catalytic core - and F(0) - the membrane proton channel. F(1) has five subunits: alpha(3), beta(3), gamma(1), delta(1), epsilon(1). F(0) has three main subunits: a(1), b(2) and c(10-14). The alpha and beta chains form an alternating ring which encloses part of the gamma chain. F(1) is attached to F(0) by a central stalk formed by the gamma and epsilon chains, while a peripheral stalk is formed by the delta and b chains.

The protein resides in the cell membrane. In terms of biological role, f(1)F(0) ATP synthase produces ATP from ADP in the presence of a proton or sodium gradient. F-type ATPases consist of two structural domains, F(1) containing the extramembraneous catalytic core and F(0) containing the membrane proton channel, linked together by a central stalk and a peripheral stalk. During catalysis, ATP synthesis in the catalytic domain of F(1) is coupled via a rotary mechanism of the central stalk subunits to proton translocation. Its function is as follows. This protein is part of the stalk that links CF(0) to CF(1). It either transmits conformational changes from CF(0) to CF(1) or is implicated in proton conduction. The sequence is that of ATP synthase subunit delta from Parafrankia sp. (strain EAN1pec).